Reading from the N-terminus, the 61-residue chain is Outer membrane lipoprotein YnbE (61 aa).

A signal peptide spans 1–16; the sequence is MKILLAALTSSFMLVG. Residue Cys17 is the site of N-palmitoyl cysteine attachment. Cys17 carries S-diacylglycerol cysteine lipidation.

The protein belongs to the lipoprotein YnbE family. Interacts with the C-terminal region of the probable phospholipid transport protein YdbH.

It localises to the cell outer membrane. Functionally, involved in outer membrane lipid homeostasis. Interacts with the inner membrane protein YdbH to form a functional protein bridge connecting the inner and outer membranes of the cell. Is required for YdbH's function and may facilitate phospholipid transport through the periplasm. The chain is Outer membrane lipoprotein YnbE (ynbE) from Escherichia coli O6:H1 (strain CFT073 / ATCC 700928 / UPEC).